Consider the following 189-residue polypeptide: Peptidyl-tRNA hydrolase (189 aa).

Position 14 (Y14) interacts with tRNA. Catalysis depends on H19, which acts as the Proton acceptor. TRNA-binding residues include F64, N66, and N112.

The protein belongs to the PTH family. In terms of assembly, monomer.

It localises to the cytoplasm. It carries out the reaction an N-acyl-L-alpha-aminoacyl-tRNA + H2O = an N-acyl-L-amino acid + a tRNA + H(+). In terms of biological role, hydrolyzes ribosome-free peptidyl-tRNAs (with 1 or more amino acids incorporated), which drop off the ribosome during protein synthesis, or as a result of ribosome stalling. Functionally, catalyzes the release of premature peptidyl moieties from peptidyl-tRNA molecules trapped in stalled 50S ribosomal subunits, and thus maintains levels of free tRNAs and 50S ribosomes. This is Peptidyl-tRNA hydrolase from Erythrobacter litoralis (strain HTCC2594).